The following is a 64-amino-acid chain: Lingual antimicrobial peptide (64 aa).

The signal sequence occupies residues 1–24 (MRLHHLLLALLFLVLSAGSGFTQG). Cystine bridges form between C31–C60, C38–C53, and C43–C61.

This sequence belongs to the beta-defensin family. LAP/TAP subfamily. As to expression, in many of the exposed epithelial surfaces including conjunctivae, bronchi, colon, urinary tract and trachea.

The protein resides in the secreted. Functionally, shows a broad spectrum of antibacterial and antifungal activities. This Bos taurus (Bovine) protein is Lingual antimicrobial peptide (LAP).